A 207-amino-acid polypeptide reads, in one-letter code: Microtubule-associated protein Jupiter (207 aa).

Residue serine 30 is modified to Phosphoserine. Residues threonine 41 and threonine 102 each carry the phosphothreonine modification. Phosphoserine occurs at positions 111, 138, and 149. Disordered regions lie at residues 129–174 (KGKY…YKAG) and 188–207 (GNQV…SGLW). The segment covering 136 to 149 (SGSVSSASSSVSSS) has biased composition (low complexity). Residues 150-164 (TENLKINVGNRSDGN) are compositionally biased toward polar residues.

It belongs to the MAP Jupiter family.

It is found in the nucleus. The protein localises to the cytoplasm. The protein resides in the cytoskeleton. Its subcellular location is the spindle. Functionally, binds to all microtubule populations. In Drosophila grimshawi (Hawaiian fruit fly), this protein is Microtubule-associated protein Jupiter.